Consider the following 355-residue polypeptide: Putative L-lysine 2,3-aminomutase (355 aa).

In terms of domain architecture, Radical SAM core spans 93–308 (VHQYANRVLM…KERLSGLSLP (216 aa)). Residues C108, C112, and C115 each coordinate [4Fe-4S] cluster. At K320 the chain carries N6-(pyridoxal phosphate)lysine.

The protein belongs to the radical SAM superfamily. KamA family. The cofactor is [4Fe-4S] cluster. Pyridoxal 5'-phosphate is required as a cofactor.

The polypeptide is Putative L-lysine 2,3-aminomutase (Treponema pallidum (strain Nichols)).